Reading from the N-terminus, the 273-residue chain is Large ribosomal subunit protein uL2cz/uL2cy (273 aa).

Disordered stretches follow at residues 1–22 (MAKH…DRQV) and 225–273 (PVDH…RRRK).

It belongs to the universal ribosomal protein uL2 family. Part of the 50S ribosomal subunit.

It is found in the plastid. Its subcellular location is the chloroplast. This is Large ribosomal subunit protein uL2cz/uL2cy (rpl2-A) from Zea mays (Maize).